A 293-amino-acid polypeptide reads, in one-letter code: Bis(5'-nucleosyl)-tetraphosphatase, symmetrical (293 aa).

The protein belongs to the Ap4A hydrolase family.

It carries out the reaction P(1),P(4)-bis(5'-adenosyl) tetraphosphate + H2O = 2 ADP + 2 H(+). Hydrolyzes diadenosine 5',5'''-P1,P4-tetraphosphate to yield ADP. The chain is Bis(5'-nucleosyl)-tetraphosphatase, symmetrical from Pseudomonas fluorescens (strain Pf0-1).